The primary structure comprises 1624 residues: Putative serine/threonine-protein kinase/receptor R831 (1624 aa).

The signal sequence occupies residues 1-25; it reads MHSVYTKYTIILILLVIYQGLPTNT. N-linked (GlcNAc...) asparagine; by host glycosylation is found at N152, N169, N200, N205, N225, N240, N245, N292, N364, N479, N541, N720, and N737. The chain crosses the membrane as a helical span at residues 747–767; the sequence is VIPIACIFGLLLLTLLIVIIF. The Protein kinase 1 domain occupies 786 to 1049; sequence LEIGETLGTG…EIMTRLSNIL (264 aa). ATP is bound by residues 792-800 and K813; that span reads LGTGGYGEV. D908 (proton acceptor) is an active-site residue. Residues 1054–1093 show a composition bias toward low complexity; it reads NMTSGTSSSSLSSGGIGKSITDSKSSNSRSSVESSNTSNT. The interval 1054–1101 is disordered; sequence NMTSGTSSSSLSSGGIGKSITDSKSSNSRSSVESSNTSNTFRGIDRHN. Residues 1109–1252 enclose the Guanylate cyclase domain; the sequence is TVAFIDIISA…STVNITGKIT (144 aa). Positions 1364-1615 constitute a Protein kinase 2 domain; sequence ISIGKQIGLG…MTEVVQQLML (252 aa). ATP-binding positions include 1370 to 1378 and K1391; that span reads IGLGSYGIV. D1487 acts as the Proton acceptor in catalysis.

Its subcellular location is the membrane. It carries out the reaction L-seryl-[protein] + ATP = O-phospho-L-seryl-[protein] + ADP + H(+). The catalysed reaction is L-threonyl-[protein] + ATP = O-phospho-L-threonyl-[protein] + ADP + H(+). The polypeptide is Putative serine/threonine-protein kinase/receptor R831 (Acanthamoeba polyphaga (Amoeba)).